Here is a 530-residue protein sequence, read N- to C-terminus: Synembryn-like chaperone C3E7.04c (530 aa).

Residues 492–512 (SFIYHCYHSFVGPIHILLLMF) traverse the membrane as a helical segment.

This sequence belongs to the synembryn family.

Its subcellular location is the membrane. Functionally, chaperone that specifically binds and folds some, but not all, nascent G alpha proteins prior to G protein heterotrimer formation, promoting their stability and activity. Also acts as a guanine nucleotide exchange factor (GEF) for G alpha proteins by stimulating exchange of bound GDP for free GTP. This chain is Synembryn-like chaperone C3E7.04c, found in Schizosaccharomyces pombe (strain 972 / ATCC 24843) (Fission yeast).